The chain runs to 383 residues: S-adenosylmethionine synthase (383 aa).

H22 lines the ATP pocket. Residue D24 participates in Mg(2+) binding. K(+) is bound at residue E50. L-methionine contacts are provided by E63 and Q99. Positions 99–109 (QSSEINQAVQS) are flexible loop. ATP contacts are provided by residues 160–162 (DMK), D235, 241–242 (RK), S258, and K262. D235 lines the L-methionine pocket. K266 serves as a coordination point for L-methionine.

The protein belongs to the AdoMet synthase family. In terms of assembly, homotetramer; dimer of dimers. Mg(2+) is required as a cofactor. Requires K(+) as cofactor.

Its subcellular location is the cytoplasm. It carries out the reaction L-methionine + ATP + H2O = S-adenosyl-L-methionine + phosphate + diphosphate. It participates in amino-acid biosynthesis; S-adenosyl-L-methionine biosynthesis; S-adenosyl-L-methionine from L-methionine: step 1/1. In terms of biological role, catalyzes the formation of S-adenosylmethionine (AdoMet) from methionine and ATP. The overall synthetic reaction is composed of two sequential steps, AdoMet formation and the subsequent tripolyphosphate hydrolysis which occurs prior to release of AdoMet from the enzyme. The sequence is that of S-adenosylmethionine synthase from Mycoplasma pneumoniae (strain ATCC 29342 / M129 / Subtype 1) (Mycoplasmoides pneumoniae).